A 103-amino-acid chain; its full sequence is Phosphoribosyl-ATP pyrophosphatase (103 aa).

The protein belongs to the PRA-PH family.

The protein resides in the cytoplasm. The enzyme catalyses 1-(5-phospho-beta-D-ribosyl)-ATP + H2O = 1-(5-phospho-beta-D-ribosyl)-5'-AMP + diphosphate + H(+). Its pathway is amino-acid biosynthesis; L-histidine biosynthesis; L-histidine from 5-phospho-alpha-D-ribose 1-diphosphate: step 2/9. In Cereibacter sphaeroides (strain ATCC 17029 / ATH 2.4.9) (Rhodobacter sphaeroides), this protein is Phosphoribosyl-ATP pyrophosphatase.